Reading from the N-terminus, the 126-residue chain is Glycine cleavage system H protein (126 aa).

The 83-residue stretch at 21-103 (TVTIGISEHA…YDGGWIVKVK (83 aa)) folds into the Lipoyl-binding domain. K62 carries the post-translational modification N6-lipoyllysine.

The protein belongs to the GcvH family. As to quaternary structure, the glycine cleavage system is composed of four proteins: P, T, L and H. The cofactor is (R)-lipoate.

Its function is as follows. The glycine cleavage system catalyzes the degradation of glycine. The H protein shuttles the methylamine group of glycine from the P protein to the T protein. The protein is Glycine cleavage system H protein of Vibrio cholerae serotype O1 (strain ATCC 39541 / Classical Ogawa 395 / O395).